A 579-amino-acid polypeptide reads, in one-letter code: Nif-specific regulatory protein (579 aa).

The region spanning 40–187 (DPVAEVPQIF…MVASLLEQAL (148 aa)) is the GAF domain. The Sigma-54 factor interaction domain occupies 226-454 (IVGSSPAIAE…LENCVNRAAA (229 aa)). ATP contacts are provided by residues 254 to 261 (GESGTGKE) and 317 to 326 (ADGGTLFLDE). The segment at 464 to 536 (EELACRQGAC…PLRTKTAQLS (73 aa)) is inter-domain linker. Positions 468 and 473 each coordinate a divalent metal cation. A disordered region spans residues 502-529 (RVSAPPPEPAPAPEPAPEAPPREEVPLR). 7 repeat units span residues 505 to 506 (AP), 507 to 508 (PP), 509 to 510 (EP), 511 to 512 (AP), 513 to 514 (AP), 515 to 516 (EP), and 517 to 518 (AP). A 7 X 2 AA tandem repeats of X-P region spans residues 505 to 518 (APPPEPAPAPEPAP). Residues 505–520 (APPPEPAPAPEPAPEA) are compositionally biased toward pro residues. The segment at 537 to 579 (REELLRALESAGWVQAKAARLLGMTPRQIAYALQKFEIELRKI) is C-terminal DNA-binding domain. The segment at residues 551–570 (QAKAARLLGMTPRQIAYALQ) is a DNA-binding region (H-T-H motif).

As to quaternary structure, interacts with sigma-54.

Its function is as follows. Required for activation of most nif operons, which are directly involved in nitrogen fixation. This chain is Nif-specific regulatory protein (nifA1), found in Rhodobacter capsulatus (Rhodopseudomonas capsulata).